The sequence spans 184 residues: Peptide deformylase 2 (184 aa).

2 residues coordinate Fe cation: Cys-110 and His-153. The active site involves Glu-154. His-157 serves as a coordination point for Fe cation.

Belongs to the polypeptide deformylase family. Fe(2+) serves as cofactor.

It catalyses the reaction N-terminal N-formyl-L-methionyl-[peptide] + H2O = N-terminal L-methionyl-[peptide] + formate. In terms of biological role, removes the formyl group from the N-terminal Met of newly synthesized proteins. Requires at least a dipeptide for an efficient rate of reaction. N-terminal L-methionine is a prerequisite for activity but the enzyme has broad specificity at other positions. The protein is Peptide deformylase 2 (defB) of Bacillus subtilis (strain 168).